Consider the following 482-residue polypeptide: Membrane-bound lytic murein transglycosylase F (482 aa).

Residues 1–18 form the signal peptide; that stretch reads MKGLFLRIITALALLFWA. A non-LT domain region spans residues 19–267; that stretch reads IDMVFPWQFL…NLKEKYLGHI (249 aa). An LT domain region spans residues 268–482; sequence SQFDYVDTRS…NLEEIKENED (215 aa). The active site involves E312. Residues 457 to 470 show a composition bias toward polar residues; sequence ENQTTNDNANNESA. The disordered stretch occupies residues 457–482; it reads ENQTTNDNANNESAVKNLEEIKENED. Basic and acidic residues predominate over residues 473–482; that stretch reads NLEEIKENED.

In the N-terminal section; belongs to the bacterial solute-binding protein 3 family. This sequence in the C-terminal section; belongs to the transglycosylase Slt family.

Its subcellular location is the cell outer membrane. The enzyme catalyses Exolytic cleavage of the (1-&gt;4)-beta-glycosidic linkage between N-acetylmuramic acid (MurNAc) and N-acetylglucosamine (GlcNAc) residues in peptidoglycan, from either the reducing or the non-reducing ends of the peptidoglycan chains, with concomitant formation of a 1,6-anhydrobond in the MurNAc residue.. Its function is as follows. Murein-degrading enzyme that degrades murein glycan strands and insoluble, high-molecular weight murein sacculi, with the concomitant formation of a 1,6-anhydromuramoyl product. Lytic transglycosylases (LTs) play an integral role in the metabolism of the peptidoglycan (PG) sacculus. Their lytic action creates space within the PG sacculus to allow for its expansion as well as for the insertion of various structures such as secretion systems and flagella. The sequence is that of Membrane-bound lytic murein transglycosylase F from Haemophilus influenzae (strain PittGG).